We begin with the raw amino-acid sequence, 193 residues long: uncharacterized protein (193 aa).

The disordered stretch occupies residues 55–94; that stretch reads PVGGAAGARSLSQALPAPAPPPPPPPGLGPSSERPWPSPW. Residues 71-82 are compositionally biased toward pro residues; it reads APAPPPPPPPGL.

This is an uncharacterized protein from Homo sapiens (Human).